A 238-amino-acid chain; its full sequence is Protein G1-like8 (238 aa).

Disordered stretches follow at residues 1–33 and 147–238; these read MEGG…RYES and KARG…ATRV. A compositionally biased stretch (low complexity) spans 10–27; it reads GQAQPVAQAPPAMQPMQQ. Residues 30-157 form the ALOG domain; sequence RYESQKRRDW…ARGIPYEKKK (128 aa). The Nuclear localization signal motif lies at 155–159; sequence KKKRK. The segment covering 165-176 has biased composition (pro residues); that stretch reads QPPPPPPPPPQH. Low complexity-rich tracts occupy residues 177-213 and 222-238; these read QPGA…ATSQ and TTTT…ATRV.

The protein belongs to the plant homeotic and developmental regulators ALOG protein family.

It is found in the nucleus. Its function is as follows. Probable transcription regulator that acts as a developmental regulator by promoting cell growth in response to light. The sequence is that of Protein G1-like8 (G1L8) from Oryza sativa subsp. japonica (Rice).